An 897-amino-acid polypeptide reads, in one-letter code: Alanine--tRNA ligase (897 aa).

Residues His-581, His-585, Cys-684, and His-688 each coordinate Zn(2+).

Belongs to the class-II aminoacyl-tRNA synthetase family. Zn(2+) serves as cofactor.

It is found in the cytoplasm. It carries out the reaction tRNA(Ala) + L-alanine + ATP = L-alanyl-tRNA(Ala) + AMP + diphosphate. Functionally, catalyzes the attachment of alanine to tRNA(Ala) in a two-step reaction: alanine is first activated by ATP to form Ala-AMP and then transferred to the acceptor end of tRNA(Ala). Also edits incorrectly charged Ser-tRNA(Ala) and Gly-tRNA(Ala) via its editing domain. This chain is Alanine--tRNA ligase, found in Mycobacterium sp. (strain JLS).